Here is a 558-residue protein sequence, read N- to C-terminus: Glucose-6-phosphate isomerase (558 aa).

E362 serves as the catalytic Proton donor. Active-site residues include H393 and K523.

Belongs to the GPI family.

Its subcellular location is the cytoplasm. It catalyses the reaction alpha-D-glucose 6-phosphate = beta-D-fructose 6-phosphate. It functions in the pathway carbohydrate degradation; glycolysis; D-glyceraldehyde 3-phosphate and glycerone phosphate from D-glucose: step 2/4. The protein is Glucose-6-phosphate isomerase (Pgi) of Drosophila simulans (Fruit fly).